Here is a 162-residue protein sequence, read N- to C-terminus: Ubiquitin D (162 aa).

Ubiquitin-like domains lie at 3 to 78 and 87 to 160; these read SVRT…LKVV and LFLV…THCT.

This sequence belongs to the ubiquitin D family. In terms of assembly, interacts directly with the 26S proteasome. Interacts with NUB1; this interaction facilitates the linking of UBD-conjugated target protein to the proteasome complex and accelerates its own degradation and that of its conjugates. Interacts (via ubiquitin-like 1 domain) with the spindle checkpoint protein MAD2L1 during mitosis. Present in aggresomes of proteasome inhibited cells. Interacts with HDAC6 under proteasome impairment conditions. Forms a thioester with UBA6 in cells stimulated with tumor necrosis factor-alpha (TNFa) and interferon-gamma (IFNg). Interacts with SQSTM1 and TP53/p53. Post-translationally, can be acetylated. Mostly expressed in thymus and intestine.

The protein localises to the nucleus. It localises to the cytoplasm. In terms of biological role, ubiquitin-like protein modifier which can be covalently attached to target proteins and subsequently leads to their degradation by the 26S proteasome, in a NUB1-dependent manner. Conjugation to the target protein is activated by UBA6 via adenylation of its C-terminal glycine. Probably functions as a survival factor. Promotes the expression of the proteasome subunit beta type-9 (PSMB9/LMP2). Regulates TNF-alpha-induced and LPS-mediated activation of the central mediator of innate immunity NF-kappa-B by promoting TNF-alpha-mediated proteasomal degradation of ubiquitinated-I-kappa-B-alpha. Required for TNF-alpha-induced p65 nuclear translocation in renal tubular epithelial cells (RTECs). May be involved in dendritic cell (DC) maturation, the process by which immature dendritic cells differentiate into fully competent antigen-presenting cells that initiate T-cell responses. Mediates mitotic non-disjunction and chromosome instability, in long-term in vitro culture and cancers, by abbreviating mitotic phase and impairing the kinetochore localization of MAD2L1 during the prometaphase stage of the cell cycle. May be involved in the formation of aggresomes when proteasome is saturated or impaired. Mediates apoptosis in a caspase-dependent manner, especially in renal epithelium and tubular cells during renal diseases. The protein is Ubiquitin D (Ubd) of Mus musculus (Mouse).